Reading from the N-terminus, the 476-residue chain is Adenosylhomocysteinase (476 aa).

Substrate is bound by residues threonine 67, aspartate 142, and glutamate 202. Threonine 203–threonine 205 provides a ligand contact to NAD(+). Substrate is bound by residues lysine 232 and aspartate 236. NAD(+) contacts are provided by residues asparagine 237, glycine 266–glycine 271, glutamate 289, asparagine 324, isoleucine 345–histidine 347, and asparagine 390.

The protein belongs to the adenosylhomocysteinase family. Requires NAD(+) as cofactor.

The protein resides in the cytoplasm. It catalyses the reaction S-adenosyl-L-homocysteine + H2O = L-homocysteine + adenosine. It functions in the pathway amino-acid biosynthesis; L-homocysteine biosynthesis; L-homocysteine from S-adenosyl-L-homocysteine: step 1/1. Its function is as follows. May play a key role in the regulation of the intracellular concentration of adenosylhomocysteine. The polypeptide is Adenosylhomocysteinase (Synechococcus sp. (strain CC9902)).